The sequence spans 528 residues: Peptide chain release factor 3 (528 aa).

The tr-type G domain occupies Ser11–Ile279. GTP is bound by residues Ser20 to Thr27, Asp88 to His92, and Asn142 to Asp145.

It belongs to the TRAFAC class translation factor GTPase superfamily. Classic translation factor GTPase family. PrfC subfamily.

Its subcellular location is the cytoplasm. In terms of biological role, increases the formation of ribosomal termination complexes and stimulates activities of RF-1 and RF-2. It binds guanine nucleotides and has strong preference for UGA stop codons. It may interact directly with the ribosome. The stimulation of RF-1 and RF-2 is significantly reduced by GTP and GDP, but not by GMP. The sequence is that of Peptide chain release factor 3 from Marinomonas sp. (strain MWYL1).